The chain runs to 569 residues: MICSIMGGLRSLRAARPYSHQSNTETKHMGLVGVASLLVLVADCTIFASGLSSSTRSRESQTLSASTSGNPFQANVEMKTFMERFNLTHHHQSGIYVDLGQDKEVDGTLYREPAGLCPIWGKHIELQQPDRPPYRNNFLEDVPTEKEYKQSGNPLPGGFNLNFVTPSGQRISPFPMELLEKNSNIKASTDLGRCAEFAFKTVAMDKNNKATKYRYPFVYDSKKRLCHILYVSMQLMEGKKYCSVKGEPPDLTWYCFKPRKSVTENHHLIYGSAYVGENPDAFISKCPNQALRGYRFGVWKKGRCLDYTELTDTVIERVESKAQCWVKTFENDGVASDQPHTYPLTSQASWNDWWPLHQSDQPHSGGVGRNYGFYYVDTTGEGKCALSDQVPDCLVSDSAAVSYTAAGSLSEETPNFIIPSNPSVTPPTPETALQCTADKFPDSFGACDVQACKRQKTSCVGGQIQSTSVDCTADEQNECGSNTALIAGLAVGGVLLLALLGGGCYFAKRLDRNKGVQAAHHEHEFQSDRGARKKRPSDLMQEAEPSFWDEAEENIEQDGETHVMVEGDY.

The signal sequence occupies residues 1-48 (MICSIMGGLRSLRAARPYSHQSNTETKHMGLVGVASLLVLVADCTIFA). A propeptide spans 49–66 (SGLSSSTRSRESQTLSAS) (removed in mature form; required for microneme targeting of the proprotein). The Extracellular segment spans residues 49 to 483 (SGLSSSTRSR…DEQNECGSNT (435 aa)). The tract at residues 67 to 287 (TSGNPFQANV…NPDAFISKCP (221 aa)) is DI. Asn-86 carries N-linked (GlcNAc...) asparagine glycosylation. 8 disulfide bridges follow: Cys-117-Cys-286, Cys-194-Cys-226, Cys-242-Cys-255, Cys-304-Cys-393, Cys-324-Cys-384, Cys-435-Cys-459, Cys-447-Cys-471, and Cys-452-Cys-479. Residues 288–415 (NQALRGYRFG…AGSLSEETPN (128 aa)) form a DII region. The DIII stretch occupies residues 416-487 (FIIPSNPSVT…ECGSNTALIA (72 aa)). The chain crosses the membrane as a helical span at residues 484 to 504 (ALIAGLAVGGVLLLALLGGGC). At 505 to 569 (YFAKRLDRNK…ETHVMVEGDY (65 aa)) the chain is on the cytoplasmic side. A compositionally biased stretch (basic and acidic residues) spans 518–530 (AAHHEHEFQSDRG). The segment at 518-548 (AAHHEHEFQSDRGARKKRPSDLMQEAEPSFW) is disordered.

It belongs to the apicomplexan parasites AMA1 family. Component of the moving junction (MJ) complex, composed of AMA1, a transmembrane protein on the parasite surface, and a complex of the rhoptry neck proteins RON2, RON4, RON5 and RON8 localized to the cytoplasmic face of the host plasma membrane. Interacts (via ectodomain) with RON2 (via C-terminus); RON2 serves as the receptor for AMA1 on the host plasma membrane. AMA1 and the RON proteins are initially in distinct compartments within the parasite, namely the micronemes and the rhoptries, and interaction happens only upon initiation of invasion when the micronemes and rhoptries discharge. Proteolytically cleaved during invasion within its transmembrane domain, releasing a soluble form from the tachyzoite surface. The cytosolic tail generated by ROM4 cleavage during invasion may trigger parasite replication within the parasitophorous vacuole.

Its subcellular location is the cell membrane. It is found in the secreted. In terms of biological role, essential microneme protein that plays an important role in host cell invasion. Part of the moving junction (MJ) complex, a ringlike structure formed between the plasma membranes of the apical tip of the parasite and the target host cell. During invasion, the MJ migrates from the anterior to the posterior of the parasite, leading to internalization of the parasite into a parasitophorous vacuole (PV). The sequence is that of Apical membrane antigen 1 (AMA1) from Toxoplasma gondii (strain ATCC 50861 / VEG).